Reading from the N-terminus, the 158-residue chain is uncharacterized protein (158 aa).

It belongs to the mimivirus L223/L227/L812 family.

This is an uncharacterized protein from Acanthamoeba polyphaga mimivirus (APMV).